A 331-amino-acid chain; its full sequence is Mitochondrial carrier protein CoAc1 (331 aa).

6 helical membrane passes run Leu-16–Ile-36, Phe-79–Met-99, Leu-123–Ala-143, Gly-193–Glu-213, Leu-231–Val-251, and Phe-292–Val-312. 3 Solcar repeats span residues Pro-21 to Trp-107, Ser-117 to His-218, and Asn-225 to Trp-319.

Belongs to the mitochondrial carrier (TC 2.A.29) family. As to expression, expressed throughout the plant.

The protein resides in the mitochondrion inner membrane. Functionally, required for the accumulation of coenzyme A in the mitochondrial matrix. In Arabidopsis thaliana (Mouse-ear cress), this protein is Mitochondrial carrier protein CoAc1.